The primary structure comprises 394 residues: MNKKSIRDVDLKGKRVFCRVDFNVPMKEGKITDETRIRAALPTIQYLVEQGAKVILASHLGRPKGQVVEEMRLTPVAARLGELLGKDVKKADEAFGPAVQEMVAAMNEGDVLVLENVRFYAGEEKNDAELAKEFAALADIFVNDAFGAAHRAHASTAGIADYLPAVSGLLMEKELDVLGKALSNPDRPFTAIIGGAKVKDKIGVIRHLLDKVDNLIIGGGLAYTFVKALGHEIGLSLCEDDKIELAKEFMQLAKEKGVNFYMPVDVVITEEFSETATTKIVNIDSIPSNWEGVDIGPKTREIYADVIKNSKLVVWNGPMGVFEMTPFAEGTKAVGQALADAEGTYSVIGGGDSAAAVEKFGMADKMSHISTGGGASLEFMEGKELPGVVCLNDK.

Substrate contacts are provided by residues 21 to 23, Arg-36, 59 to 62, Arg-118, and Arg-151; these read DFN and HLGR. Ser-183 bears the Phosphoserine mark. The ATP site is built by Lys-201 and Gly-292. Residue Thr-299 is modified to Phosphothreonine. Residues Glu-323 and 350-353 contribute to the ATP site; that span reads GGDS.

It belongs to the phosphoglycerate kinase family. Monomer.

Its subcellular location is the cytoplasm. The catalysed reaction is (2R)-3-phosphoglycerate + ATP = (2R)-3-phospho-glyceroyl phosphate + ADP. It participates in carbohydrate degradation; glycolysis; pyruvate from D-glyceraldehyde 3-phosphate: step 2/5. This Bacillus cereus (strain ATCC 10987 / NRS 248) protein is Phosphoglycerate kinase.